A 344-amino-acid polypeptide reads, in one-letter code: Probable dual-specificity RNA methyltransferase RlmN (344 aa).

Catalysis depends on glutamate 92, which acts as the Proton acceptor. One can recognise a Radical SAM core domain in the interval 98–325 (DEDRATLCVS…TTIRASRGED (228 aa)). Cysteine 105 and cysteine 330 are joined by a disulfide. [4Fe-4S] cluster contacts are provided by cysteine 112, cysteine 116, and cysteine 119. Residues 157–158 (GE), serine 189, 211–213 (SLH), and histidine 287 each bind S-adenosyl-L-methionine. Cysteine 330 serves as the catalytic S-methylcysteine intermediate.

It belongs to the radical SAM superfamily. RlmN family. Requires [4Fe-4S] cluster as cofactor.

It is found in the cytoplasm. It catalyses the reaction adenosine(2503) in 23S rRNA + 2 reduced [2Fe-2S]-[ferredoxin] + 2 S-adenosyl-L-methionine = 2-methyladenosine(2503) in 23S rRNA + 5'-deoxyadenosine + L-methionine + 2 oxidized [2Fe-2S]-[ferredoxin] + S-adenosyl-L-homocysteine. The enzyme catalyses adenosine(37) in tRNA + 2 reduced [2Fe-2S]-[ferredoxin] + 2 S-adenosyl-L-methionine = 2-methyladenosine(37) in tRNA + 5'-deoxyadenosine + L-methionine + 2 oxidized [2Fe-2S]-[ferredoxin] + S-adenosyl-L-homocysteine. Specifically methylates position 2 of adenine 2503 in 23S rRNA and position 2 of adenine 37 in tRNAs. This Bacteroides fragilis (strain ATCC 25285 / DSM 2151 / CCUG 4856 / JCM 11019 / LMG 10263 / NCTC 9343 / Onslow / VPI 2553 / EN-2) protein is Probable dual-specificity RNA methyltransferase RlmN.